Consider the following 530-residue polypeptide: Cytochrome P450 monooxygenase sttB (530 aa).

Residue Asn-5 is glycosylated (N-linked (GlcNAc...) asparagine). The chain crosses the membrane as a helical span at residues 24 to 44 (LPILTVALLTGIASAVYINVS). N-linked (GlcNAc...) asparagine glycosylation occurs at Asn-230.

Belongs to the cytochrome P450 family. The cofactor is heme.

The protein localises to the membrane. It carries out the reaction preaspterpenacid acid I + reduced [NADPH--hemoprotein reductase] + O2 = preaspterpenacid acid II + oxidized [NADPH--hemoprotein reductase] + H2O + H(+). The protein operates within secondary metabolite biosynthesis; terpenoid biosynthesis. Functionally, cytochrome P450 monooxygenase; part of the gene cluster that mediates the biosynthesis of aspterpenacids. Performs the C22-oxidative modification of the terpene synthase sttA product preaspterpenacid I to produce preaspterpenacid II. It has still to be determined how preaspterpenacid II is further modified to produce aspterpenacids. This Aspergillus terreus (strain NIH 2624 / FGSC A1156) protein is Cytochrome P450 monooxygenase sttB.